A 200-amino-acid chain; its full sequence is Probable nicotinate-nucleotide adenylyltransferase (200 aa).

Belongs to the NadD family.

The catalysed reaction is nicotinate beta-D-ribonucleotide + ATP + H(+) = deamido-NAD(+) + diphosphate. It functions in the pathway cofactor biosynthesis; NAD(+) biosynthesis; deamido-NAD(+) from nicotinate D-ribonucleotide: step 1/1. Catalyzes the reversible adenylation of nicotinate mononucleotide (NaMN) to nicotinic acid adenine dinucleotide (NaAD). The polypeptide is Probable nicotinate-nucleotide adenylyltransferase (Clostridium botulinum (strain Alaska E43 / Type E3)).